The following is a 290-amino-acid chain: MSWFESFVLGLVQGLTEFLPISSSAHLRLTAAFAGWHDPGAAFTAISQIGTEAAVLIYFRKDIARILSAWFRSLTDRSMRGDHDAQMGWLVIVGSIPIGVLGITLKDQIEGPFRDLRLIATTLIVMGIVLGVADRLAARDETGGKHRVVKERKTLKDLGVKDGLIYGFCQAMALIPGVSRSGATISGGLLMGYTRESAARYSFLLAIPAVLASGAYELKDVGEGHVSWGPTIFATLVAFFVGYAVIAWFMKFITTKSFMPFVIYRILLGVVLFILIWAGVLSPHAGESAG.

A run of 6 helical transmembrane segments spans residues Pro39–Phe59, Ala85–Leu105, Leu118–Ala138, Ser202–Gly222, Pro230–Met250, and Phe261–Leu281.

This sequence belongs to the UppP family.

It localises to the cell membrane. It carries out the reaction di-trans,octa-cis-undecaprenyl diphosphate + H2O = di-trans,octa-cis-undecaprenyl phosphate + phosphate + H(+). In terms of biological role, catalyzes the dephosphorylation of undecaprenyl diphosphate (UPP). Confers resistance to bacitracin. The sequence is that of Undecaprenyl-diphosphatase from Streptomyces griseus subsp. griseus (strain JCM 4626 / CBS 651.72 / NBRC 13350 / KCC S-0626 / ISP 5235).